We begin with the raw amino-acid sequence, 419 residues long: MTGLPDQLRRPVRGMRDWMPQQLYALRRMEEVLSSVAEQYGYRRVETPVVEHFEVLAKKAGQEVINEIYYFRDKAGRELGLRFDMTVPIARVLSYNLDLPRPVRWYYFSKVFRYDEPQHGRYREFFQFGVELIGSASPRADAEVVQLLAASLEAAGASKYVIRINDRRAVDKLLESLGALSHRDAVYRALDKKLKLPREEVIGIMTSGGLPRDAAEKIYDTASEMSLDEAVEVLRRLDGRLGEAYAKFVKYLEAAVPLERFKFDMSIVRGLDYYTGVVFEAFVGDYWLAVGGGGRYDDLLELYSGVKIPALGFAIGVERLMEAVGLQSVEKPLDYYIYIFDDDAYKHAVALANRLRKQGHSVVVELGEKNLKDVFEYVLKIGTRYLVLIGRKELEKGVVKIRDLQKRGEVEVPLSALLS.

This sequence belongs to the class-II aminoacyl-tRNA synthetase family.

The protein localises to the cytoplasm. The enzyme catalyses tRNA(His) + L-histidine + ATP = L-histidyl-tRNA(His) + AMP + diphosphate + H(+). This Pyrobaculum arsenaticum (strain DSM 13514 / JCM 11321 / PZ6) protein is Histidine--tRNA ligase.